Here is a 276-residue protein sequence, read N- to C-terminus: Ribosomal RNA small subunit methyltransferase A (276 aa).

Positions 15, 17, 42, 64, 89, and 108 each coordinate S-adenosyl-L-methionine.

This sequence belongs to the class I-like SAM-binding methyltransferase superfamily. rRNA adenine N(6)-methyltransferase family. RsmA subfamily.

Its subcellular location is the cytoplasm. The catalysed reaction is adenosine(1518)/adenosine(1519) in 16S rRNA + 4 S-adenosyl-L-methionine = N(6)-dimethyladenosine(1518)/N(6)-dimethyladenosine(1519) in 16S rRNA + 4 S-adenosyl-L-homocysteine + 4 H(+). Its function is as follows. Specifically dimethylates two adjacent adenosines (A1518 and A1519) in the loop of a conserved hairpin near the 3'-end of 16S rRNA in the 30S particle. May play a critical role in biogenesis of 30S subunits. This is Ribosomal RNA small subunit methyltransferase A from Prochlorococcus marinus (strain MIT 9515).